We begin with the raw amino-acid sequence, 105 residues long: Ig lambda-1 chain C region (105 aa).

The Ig-like domain occupies proline 6–serine 100. A disulfide bridge connects residues cysteine 27 and cysteine 86.

The protein is Ig lambda-1 chain C region of Mus musculus (Mouse).